The sequence spans 367 residues: Ataxin-7-like protein 3 (367 aa).

Residues 84–105 (CVCPNCSRSIAASRFAPHLEKC) form an SGF11-type zinc finger. Over residues 116-125 (ANRRIASSNN) the composition is skewed to low complexity. The tract at residues 116-184 (ANRRIASSNN…GELSGSVNPD (69 aa)) is disordered. Residues 132–141 (DQEDNDDIND) show a composition bias toward acidic residues. Residues 199-266 (LGPEELRSIL…TMLENEAYEP (68 aa)) form the SCA7 domain. The segment covering 280-299 (ASSDISPSDSASSKASTNNS) has biased composition (low complexity). The tract at residues 280 to 367 (ASSDISPSDS…PAPSIYDDLN (88 aa)) is disordered. A compositionally biased stretch (basic and acidic residues) spans 318–329 (GERDKAQERDRI). Over residues 330–346 (AGSGSSGSSSQNALGLS) the composition is skewed to low complexity.

Belongs to the SGF11 family. Component of some SAGA transcription coactivator-HAT complexes. Within the SAGA complex, participates in a subcomplex of SAGA called the DUB module (deubiquitination module).

It is found in the nucleus. Component of the transcription regulatory histone acetylation (HAT) complex SAGA, a multiprotein complex that activates transcription by remodeling chromatin and mediating histone acetylation and deubiquitination. Within the SAGA complex, participates in a subcomplex that specifically deubiquitinates histone H2B. The SAGA complex is recruited to specific gene promoters by activators, where it is required for transcription. In Danio rerio (Zebrafish), this protein is Ataxin-7-like protein 3 (atxn7l3).